We begin with the raw amino-acid sequence, 569 residues long: MKKISRKEYASMYGPTTGDKVRLGDTDLIAEVEHDYTIYGEELKFGGGKTLREGMSQSNNPSKEELDLIITNALIVDYTGIYKADIGIKDGKIAGIGKGGNKDMQDGVKNNLSVGPATEALAGEGLIVTAGGIDTHIHFISPQQIPTAFASGVTTMIGGGTGPADGTNATTITPGRRNLKFMLRAAEEYSMNFGFLAKGNVSNDASLADQIEAGAIGFKIHEDWGTTPSAINHALDVADKYDVQVAIHTDTLNEAGCVEDTMAAIAGRTMHTFHTEGAGGGHAPDIIKVAGEHNILPASTNPTIPFTVNTEAEHMDMLMVCHHLDKSIKEDVQFADSRIRPQTIAAEDTLHDMGIFSITSSDSQAMGRVGEVITRTWQTADKNKKEFGRLKEEKGDNDNFRIKRYLSKYTINPAIAHGISEYVGSVEVGKVADLVLWSPAFFGVKPNMIIKGGFIALSQMGDANASIPTPQPVYYREMFAHHGKAKYDANITFVSQAAYDKGIKEELGLERQVLPVKNCRNITKKDMQFNDTTAHIEVNSETYHVFVDGKEVTSKPANKVSLAQLFSIF.

One can recognise a Urease domain in the interval 131–569; that stretch reads GGIDTHIHFI…VSLAQLFSIF (439 aa). Positions 136, 138, and 219 each coordinate Ni(2+). At lysine 219 the chain carries N6-carboxylysine. Histidine 221 lines the substrate pocket. Ni(2+) is bound by residues histidine 248 and histidine 274. The Proton donor role is filled by histidine 322. Aspartate 362 is a Ni(2+) binding site.

This sequence belongs to the metallo-dependent hydrolases superfamily. Urease alpha subunit family. As to quaternary structure, heterohexamer of 3 UreA (alpha) and 3 UreB (beta) subunits. Requires Ni cation as cofactor. In terms of processing, carboxylation allows a single lysine to coordinate two nickel ions.

Its subcellular location is the cytoplasm. The enzyme catalyses urea + 2 H2O + H(+) = hydrogencarbonate + 2 NH4(+). It functions in the pathway nitrogen metabolism; urea degradation; CO(2) and NH(3) from urea (urease route): step 1/1. The sequence is that of Urease subunit beta from Helicobacter pylori (strain HPAG1).